The primary structure comprises 177 residues: FMRFamide-like neuropeptides 7 (177 aa).

A signal peptide spans 1–19 (MLGSRFLLLALGLLVLVLA). Positions 20–49 (EESAEQQVQEPTELEKSGEQLSEEDLIDEQ) are excised as a propeptide. The interval 25–106 (QQVQEPTELE…RSSMVRFGKR (82 aa)) is disordered. Phenylalanine amide occurs at positions 62, 75, 89, 103, 117, and 130. At leucine 143 the chain carries Leucine amide. At phenylalanine 157 the chain carries Phenylalanine amide. The propeptide occupies 161–177 (SMEFEMQSNEKNIEDSE).

Belongs to the FARP (FMRFamide related peptide) family. As to expression, expressed in the ASI sensory neurons, the ALA interneuron and the AVG interneuron from where secretion occurs. Expression in the ASI neurons is necessary and sufficient to maintain serotonin-induced fat loss.

The protein localises to the secreted. Functionally, FMRFamide-like neuropeptides. Stimulates serotonin-induced fat loss by binding to and activating the npr-22 receptor which leads to induction of the atgl-1 lipase and subsequent fat loss. Together with atfs-1, negatively regulates the expression of the transcription regulator hlh-11, to promote expression of atgl-1, and thus atgl-1-dependent fat oxidation in response to mitochondrial stress. Its function is as follows. TPMQRSSMVRF-amide: Acts as a ligand for the npr-22 receptor in vitro. In terms of biological role, SPMQRSSMVRF-amide: Acts as a ligand for the npr-22 receptor in vitro. Acts as a ligand for the npr-22 receptor in vitro. In Caenorhabditis elegans, this protein is FMRFamide-like neuropeptides 7.